Reading from the N-terminus, the 162-residue chain is Xanthine-guanine phosphoribosyltransferase (162 aa).

5-phospho-alpha-D-ribose 1-diphosphate-binding positions include Arg41–Gly42 and Asp92–Thr100. Mg(2+) is bound at residue Asp93. Positions 96 and 139 each coordinate guanine. Xanthine contacts are provided by Asp96 and Ile139. Residues Asp96–Thr100 and Trp138–Ile139 contribute to the GMP site.

It belongs to the purine/pyrimidine phosphoribosyltransferase family. XGPT subfamily. As to quaternary structure, homotetramer. Mg(2+) serves as cofactor.

It localises to the cell inner membrane. The enzyme catalyses GMP + diphosphate = guanine + 5-phospho-alpha-D-ribose 1-diphosphate. It catalyses the reaction XMP + diphosphate = xanthine + 5-phospho-alpha-D-ribose 1-diphosphate. It carries out the reaction IMP + diphosphate = hypoxanthine + 5-phospho-alpha-D-ribose 1-diphosphate. The protein operates within purine metabolism; GMP biosynthesis via salvage pathway; GMP from guanine: step 1/1. It participates in purine metabolism; XMP biosynthesis via salvage pathway; XMP from xanthine: step 1/1. Its function is as follows. Purine salvage pathway enzyme that catalyzes the transfer of the ribosyl-5-phosphate group from 5-phospho-alpha-D-ribose 1-diphosphate (PRPP) to the N9 position of the 6-oxopurines guanine and xanthine to form the corresponding ribonucleotides GMP (guanosine 5'-monophosphate) and XMP (xanthosine 5'-monophosphate), with the release of PPi. To a lesser extent, also acts on hypoxanthine. This chain is Xanthine-guanine phosphoribosyltransferase, found in Chromohalobacter salexigens (strain ATCC BAA-138 / DSM 3043 / CIP 106854 / NCIMB 13768 / 1H11).